Consider the following 1191-residue polypeptide: Solute carrier family 12 member 2 (1191 aa).

Residues 1–166 (MEPAFPASSA…MSEGSLHSSG (166 aa)) form a disordered region. At 1 to 258 (MEPAFPASSA…ADNKGVVKFG (258 aa)) the chain is on the cytoplasmic side. 4 stretches are compositionally biased toward low complexity: residues 13 to 25 (QSQS…AGQQ), 59 to 69 (KGQTAAQPAAA), 80 to 99 (AAAP…AAAA), and 131 to 141 (SASSAHGGHQP). Polar residues predominate over residues 142-155 (PSESMNGYPQNGDT). A phosphothreonine; by OXSR1 and STK39 mark is found at T175, T179, and T184. T189 and T202 each carry phosphothreonine. Residues 259-288 (WIKGVLVRCMLNIWGVMLFIRLSWIVGHAG) form a discontinuously helical membrane-spanning segment. L269 provides a ligand contact to Na(+). 2 residues coordinate K(+): N270 and I271. W272 contacts Na(+). Chloride is bound by residues G273, V274, and M275. A helical transmembrane segment spans residues 289–308 (IGLALLVIGTATVVTTITGL). Over 309-339 (STSAITTNGFVRGGGAYYLISRSLGPEFGGA) the chain is Cytoplasmic. A helical membrane pass occupies residues 340–367 (IGLIFAFANAVAVAMYVVGFAETVRDLL). F344 is a chloride binding site. A K(+)-binding site is contributed by Y355. Residues 368 to 377 (VEHNALMIDE) are Extracellular-facing. A helical membrane pass occupies residues 378 to 401 (MSDIRIIGSVTIVVLFGISVAGME). Topologically, residues 402–404 (WEA) are cytoplasmic. A helical membrane pass occupies residues 405–426 (KAQIVLLGILLLAIVNFTVGTF). The Extracellular segment spans residues 427-458 (IPANDKRAKGFFNYRGEIFSENFVPDFRDGED). The chain crosses the membrane as a discontinuously helical span at residues 459–476 (FFSVFAIFFPAATGILAG). Residues P468, A469, and T471 each contribute to the K(+) site. Residues P468 and A469 each coordinate chloride. Chloride-binding residues include G472 and I473. Residues 477–491 (ANISGDLADPQLAIP) are Cytoplasmic-facing. The chain crosses the membrane as a helical span at residues 492 to 513 (KGTLLAILITTIVYAGAAVSVG). At 514 to 571 (SCIVREATGNLTDAIIPGTVTNCTNVACKLGFNFSSCATNKCSYGLMNDFQVMSLVSG) the chain is on the extracellular side. N-linked (GlcNAc...) asparagine glycans are attached at residues N523 and N535. A disulfide bridge links C536 with C541. A glycan (N-linked (GlcNAc...) asparagine) is linked at N546. Cysteines 550 and 555 form a disulfide. The chain crosses the membrane as a helical span at residues 572 to 596 (FGPLITAGIFSATLSSALASLVSAP). 3 residues coordinate Na(+): A583, S586, and S587. At 597-624 (KIFQALCKDNIYPGLHVFSVGYGKNNEP) the chain is on the cytoplasmic side. 2 helical membrane-spanning segments follow: residues 625 to 645 (LRGY…AELN) and 646 to 664 (VIAP…LINF). Chloride is bound by residues F655 and Y659. At 665–687 (SVFHASLAKSPGWRPAFRFYNMW) the chain is on the cytoplasmic side. A run of 2 helical transmembrane segments spans residues 688–705 (ISLI…VINW) and 706–718 (WAAL…VLAL). Residues 719–1191 (YIYVTYKKPD…NHQSVLTFYS (473 aa)) are Cytoplasmic-facing. The scissor helix stretch occupies residues 734–751 (STQALTYLNALQHAIRLT). A disordered region spans residues 929 to 972 (HSDADSSKPSSKSVSETNSPAVCQDQKDEEDDGKASTQPLLKKE). The span at 935-948 (SKPSSKSVSETNSP) shows a compositional bias: low complexity. The residue at position 1114 (T1114) is a Phosphothreonine.

The protein belongs to the SLC12A transporter family. As to quaternary structure, homodimer. Phosphorylated at Thr-175, Thr-179 and Thr-184 by OXSR1/OSR1 and STK39/SPAK downstream of WNK kinases (WNK1, WNK2, WNK3 or WNK4), promoting its activity. As to expression, strongly expressed in rectal gland, brain, gill and intestine. Also detected at lower levels in heart, kidney, and testis.

Its subcellular location is the basolateral cell membrane. It catalyses the reaction K(+)(out) + 2 chloride(out) + Na(+)(out) = K(+)(in) + 2 chloride(in) + Na(+)(in). Activated following phosphorylation by OXSR1/OSR1 and STK39/SPAK. Inhibited by bumetanide. Cation-chloride cotransporter which mediates the electroneutral transport of chloride, potassium and/or sodium ions across the membrane. Plays a vital role in the regulation of ionic balance and cell volume. The polypeptide is Solute carrier family 12 member 2 (SLC12A2) (Squalus acanthias (Spiny dogfish)).